The following is a 378-amino-acid chain: Quinolinate synthase (378 aa).

Residues His59 and Ser80 each coordinate iminosuccinate. Cys125 provides a ligand contact to [4Fe-4S] cluster. Residues 151 to 153 (YAN) and Ser168 each bind iminosuccinate. Cys212 provides a ligand contact to [4Fe-4S] cluster. Iminosuccinate contacts are provided by residues 238–240 (HPE) and Thr255. Cys309 is a binding site for [4Fe-4S] cluster.

Belongs to the quinolinate synthase family. Type 1 subfamily. It depends on [4Fe-4S] cluster as a cofactor.

Its subcellular location is the cytoplasm. It catalyses the reaction iminosuccinate + dihydroxyacetone phosphate = quinolinate + phosphate + 2 H2O + H(+). Its pathway is cofactor biosynthesis; NAD(+) biosynthesis; quinolinate from iminoaspartate: step 1/1. Its function is as follows. Catalyzes the condensation of iminoaspartate with dihydroxyacetone phosphate to form quinolinate. The chain is Quinolinate synthase from Burkholderia lata (strain ATCC 17760 / DSM 23089 / LMG 22485 / NCIMB 9086 / R18194 / 383).